The sequence spans 236 residues: Pyridoxal 5'-phosphate synthase subunit PdxT (236 aa).

L-glutamine is bound at residue 61 to 63 (GES). Residue C93 is the Nucleophile of the active site. L-glutamine-binding positions include R127 and 163 to 164 (IR). Catalysis depends on charge relay system residues H215 and E217.

This sequence belongs to the glutaminase PdxT/SNO family. In terms of assembly, in the presence of PdxS, forms a dodecamer of heterodimers. Only shows activity in the heterodimer.

The enzyme catalyses aldehydo-D-ribose 5-phosphate + D-glyceraldehyde 3-phosphate + L-glutamine = pyridoxal 5'-phosphate + L-glutamate + phosphate + 3 H2O + H(+). The catalysed reaction is L-glutamine + H2O = L-glutamate + NH4(+). The protein operates within cofactor biosynthesis; pyridoxal 5'-phosphate biosynthesis. Functionally, catalyzes the hydrolysis of glutamine to glutamate and ammonia as part of the biosynthesis of pyridoxal 5'-phosphate. The resulting ammonia molecule is channeled to the active site of PdxS. In Pseudarthrobacter chlorophenolicus (strain ATCC 700700 / DSM 12829 / CIP 107037 / JCM 12360 / KCTC 9906 / NCIMB 13794 / A6) (Arthrobacter chlorophenolicus), this protein is Pyridoxal 5'-phosphate synthase subunit PdxT.